Reading from the N-terminus, the 408-residue chain is Protein ZNF365 (408 aa).

Ser16 is subject to Phosphoserine. A C2H2-type; degenerate zinc finger spans residues 26 to 51 (FRCPRCGDHTRFRSLSSLRAHLEFSH). A phosphoserine mark is found at Ser139 and Ser146. Residues 170 to 298 (VEAVDRTIEK…QLEYYQSQQA (129 aa)) adopt a coiled-coil conformation. Thr176 carries the phosphothreonine modification. Ser370 carries the phosphoserine modification.

As to quaternary structure, homodimer. Interacts with NDE1 and NDEL1. Interacts with DISC1. Interacts with PARP1. Interacts with MCRS1. As to expression, detected in several tissues, with highest levels in brain. Also expressed during embryonic development. Expressed in cerebral cortex, hippocampus, striatum, inferior colliculus and thalamus.

The protein localises to the cytoplasm. It localises to the cytoskeleton. The protein resides in the microtubule organizing center. It is found in the centrosome. Contributes to genomic stability by preventing telomere dysfunction. Involved in the morphogenesis of basket cells in the somatosensory cortex during embryogenesis. Involved in the positive regulation of oligodendrocyte differentiation during postnatal growth. Involved in dendritic arborization, morphogenesis of spine density dendrite, and establishment of postsynaptic dendrite density in cortical pyramidal neurons. Involved in the regulation of neurogenesis. Negatively regulates neurite outgrowth. Involved in homologous recombination (HR) repair pathway. Required for proper resolution of DNA double-strand breaks (DSBs) by HR. Is required for recovery of stalled replication forks, and directly contributes to genomic stability. Interacts with PARP1 and mediates MRE11-dependent DNA end resection during replication fork recovery. In Mus musculus (Mouse), this protein is Protein ZNF365 (Znf365).